A 70-amino-acid polypeptide reads, in one-letter code: U2-agatoxin-Ao1d (70 aa).

Residues 1 to 20 (MRAIIYLLLISAMVFSMTKA) form the signal peptide. Residues 21–34 (VPEEEGLQLSEDER) constitute a propeptide that is removed on maturation. Cystine bridges form between Cys-37–Cys-53, Cys-44–Cys-58, and Cys-52–Cys-68. Leucine amide is present on Leu-69.

This sequence belongs to the neurotoxin 01 (U2-agtx) family. Expressed by the venom gland.

Its subcellular location is the secreted. Its function is as follows. Insect active toxin causing rapid but reversible paralysis in crickets. No activity shown in mammals. Does not show effect on mammalian voltage-gated calcium channels. The chain is U2-agatoxin-Ao1d from Agelena orientalis (Funnel-web spider).